Consider the following 738-residue polypeptide: Phosphoribosylformylglycinamidine synthase subunit PurL (738 aa).

The active site involves His-41. ATP is bound by residues Tyr-44 and Lys-83. A Mg(2+)-binding site is contributed by Glu-85. Residues 86 to 89 (SHNH) and Arg-108 each bind substrate. The active-site Proton acceptor is the His-87. Asp-109 contributes to the Mg(2+) binding site. A substrate-binding site is contributed by Gln-233. Asp-261 is a binding site for Mg(2+). 305–307 (ESQ) contacts substrate. ATP is bound by residues Asp-490 and Gly-527. Asn-528 contacts Mg(2+). Ser-530 provides a ligand contact to substrate.

It belongs to the FGAMS family. As to quaternary structure, monomer. Part of the FGAM synthase complex composed of 1 PurL, 1 PurQ and 2 PurS subunits.

It localises to the cytoplasm. It carries out the reaction N(2)-formyl-N(1)-(5-phospho-beta-D-ribosyl)glycinamide + L-glutamine + ATP + H2O = 2-formamido-N(1)-(5-O-phospho-beta-D-ribosyl)acetamidine + L-glutamate + ADP + phosphate + H(+). Its pathway is purine metabolism; IMP biosynthesis via de novo pathway; 5-amino-1-(5-phospho-D-ribosyl)imidazole from N(2)-formyl-N(1)-(5-phospho-D-ribosyl)glycinamide: step 1/2. Part of the phosphoribosylformylglycinamidine synthase complex involved in the purines biosynthetic pathway. Catalyzes the ATP-dependent conversion of formylglycinamide ribonucleotide (FGAR) and glutamine to yield formylglycinamidine ribonucleotide (FGAM) and glutamate. The FGAM synthase complex is composed of three subunits. PurQ produces an ammonia molecule by converting glutamine to glutamate. PurL transfers the ammonia molecule to FGAR to form FGAM in an ATP-dependent manner. PurS interacts with PurQ and PurL and is thought to assist in the transfer of the ammonia molecule from PurQ to PurL. This Alkaliphilus metalliredigens (strain QYMF) protein is Phosphoribosylformylglycinamidine synthase subunit PurL.